A 150-amino-acid polypeptide reads, in one-letter code: Viral late gene transcription factor 2 (150 aa).

This sequence belongs to the orthopoxvirus VLTF-2/OPG126 family. In terms of assembly, interacts with itself. Interacts with the late transcription factors VLTF-1/OPG093.

Acts with RNA polymerase to initiate transcription from late gene promoters. In Vaccinia virus (strain Western Reserve) (VACV), this protein is Viral late gene transcription factor 2 (OPG126).